A 418-amino-acid chain; its full sequence is Gamma-glutamyl phosphate reductase (418 aa).

Belongs to the gamma-glutamyl phosphate reductase family.

Its subcellular location is the cytoplasm. It catalyses the reaction L-glutamate 5-semialdehyde + phosphate + NADP(+) = L-glutamyl 5-phosphate + NADPH + H(+). The protein operates within amino-acid biosynthesis; L-proline biosynthesis; L-glutamate 5-semialdehyde from L-glutamate: step 2/2. Functionally, catalyzes the NADPH-dependent reduction of L-glutamate 5-phosphate into L-glutamate 5-semialdehyde and phosphate. The product spontaneously undergoes cyclization to form 1-pyrroline-5-carboxylate. This chain is Gamma-glutamyl phosphate reductase, found in Nitrosococcus oceani (strain ATCC 19707 / BCRC 17464 / JCM 30415 / NCIMB 11848 / C-107).